The following is a 124-amino-acid chain: Ribonuclease pancreatic (124 aa).

The tract at residues 1-21 (AESSAMKFQRQHMDSDGHPDT) is disordered. The substrate site is built by lysine 7 and arginine 10. Histidine 12 serves as the catalytic Proton acceptor. Cystine bridges form between cysteine 26–cysteine 84, cysteine 40–cysteine 95, cysteine 58–cysteine 110, and cysteine 65–cysteine 72. Residues 41-45 (KPVNT), lysine 66, and arginine 85 contribute to the substrate site. Histidine 119 (proton donor) is an active-site residue.

It belongs to the pancreatic ribonuclease family. In terms of assembly, monomer. Interacts with and forms tight 1:1 complexes with RNH1. Dimerization of two such complexes may occur. Interaction with RNH1 inhibits this protein. Pancreas.

It is found in the secreted. The catalysed reaction is an [RNA] containing cytidine + H2O = an [RNA]-3'-cytidine-3'-phosphate + a 5'-hydroxy-ribonucleotide-3'-[RNA].. The enzyme catalyses an [RNA] containing uridine + H2O = an [RNA]-3'-uridine-3'-phosphate + a 5'-hydroxy-ribonucleotide-3'-[RNA].. Functionally, endonuclease that catalyzes the cleavage of RNA on the 3' side of pyrimidine nucleotides. Acts on single-stranded and double-stranded RNA. This chain is Ribonuclease pancreatic (RNASE1), found in Galea musteloides (Common yellow-toothed cavy).